The following is a 478-amino-acid chain: Glutamate--tRNA ligase (478 aa).

Positions 8-18 (PSPTGYLHLGN) match the 'HIGH' region motif. The 'KMSKS' region motif lies at 248–252 (KLSKR). Lys251 contributes to the ATP binding site.

Belongs to the class-I aminoacyl-tRNA synthetase family. Glutamate--tRNA ligase type 1 subfamily. Monomer.

Its subcellular location is the cytoplasm. The catalysed reaction is tRNA(Glu) + L-glutamate + ATP = L-glutamyl-tRNA(Glu) + AMP + diphosphate. Catalyzes the attachment of glutamate to tRNA(Glu) in a two-step reaction: glutamate is first activated by ATP to form Glu-AMP and then transferred to the acceptor end of tRNA(Glu). The sequence is that of Glutamate--tRNA ligase from Sulfurihydrogenibium sp. (strain YO3AOP1).